Consider the following 435-residue polypeptide: GTPase Der (435 aa).

2 consecutive EngA-type G domains span residues 4–167 and 175–350; these read PTLA…PSED and IKFS…ENQT. GTP contacts are provided by residues 10-17, 57-61, 119-122, 181-188, 228-232, and 293-296; these read GRPNVGKS, DTGGI, NKVD, DTAGI, and NKWD. Residues 351–435 form the KH-like domain; it reads RRIQSSVLND…PIHIIARKRK (85 aa).

This sequence belongs to the TRAFAC class TrmE-Era-EngA-EngB-Septin-like GTPase superfamily. EngA (Der) GTPase family. As to quaternary structure, associates with the 50S ribosomal subunit.

In terms of biological role, GTPase that plays an essential role in the late steps of ribosome biogenesis. The sequence is that of GTPase Der from Lacticaseibacillus casei (strain BL23) (Lactobacillus casei).